The primary structure comprises 289 residues: Elongation factor Ts (289 aa).

Residues 80 to 83 are involved in Mg(2+) ion dislocation from EF-Tu; it reads TDFV.

This sequence belongs to the EF-Ts family.

Its subcellular location is the cytoplasm. Functionally, associates with the EF-Tu.GDP complex and induces the exchange of GDP to GTP. It remains bound to the aminoacyl-tRNA.EF-Tu.GTP complex up to the GTP hydrolysis stage on the ribosome. The protein is Elongation factor Ts of Francisella tularensis subsp. holarctica (strain LVS).